We begin with the raw amino-acid sequence, 150 residues long: Large ribosomal subunit protein bL9 (150 aa).

The protein belongs to the bacterial ribosomal protein bL9 family.

Binds to the 23S rRNA. This is Large ribosomal subunit protein bL9 from Pseudoalteromonas atlantica (strain T6c / ATCC BAA-1087).